Reading from the N-terminus, the 298-residue chain is ATP phosphoribosyltransferase (298 aa).

This sequence belongs to the ATP phosphoribosyltransferase family. Long subfamily. Mg(2+) is required as a cofactor.

Its subcellular location is the cytoplasm. The enzyme catalyses 1-(5-phospho-beta-D-ribosyl)-ATP + diphosphate = 5-phospho-alpha-D-ribose 1-diphosphate + ATP. It participates in amino-acid biosynthesis; L-histidine biosynthesis; L-histidine from 5-phospho-alpha-D-ribose 1-diphosphate: step 1/9. Feedback inhibited by histidine. Catalyzes the condensation of ATP and 5-phosphoribose 1-diphosphate to form N'-(5'-phosphoribosyl)-ATP (PR-ATP). Has a crucial role in the pathway because the rate of histidine biosynthesis seems to be controlled primarily by regulation of HisG enzymatic activity. This chain is ATP phosphoribosyltransferase, found in Vibrio campbellii (strain ATCC BAA-1116).